A 128-amino-acid polypeptide reads, in one-letter code: Small ribosomal subunit protein uS11 (128 aa).

The protein belongs to the universal ribosomal protein uS11 family. Part of the 30S ribosomal subunit. Interacts with proteins S7 and S18. Binds to IF-3.

Functionally, located on the platform of the 30S subunit, it bridges several disparate RNA helices of the 16S rRNA. Forms part of the Shine-Dalgarno cleft in the 70S ribosome. This Leuconostoc mesenteroides subsp. mesenteroides (strain ATCC 8293 / DSM 20343 / BCRC 11652 / CCM 1803 / JCM 6124 / NCDO 523 / NBRC 100496 / NCIMB 8023 / NCTC 12954 / NRRL B-1118 / 37Y) protein is Small ribosomal subunit protein uS11.